Consider the following 640-residue polypeptide: Threonine--tRNA ligase (640 aa).

Residues 1–61 (MPIITLPNGD…TEDSTLQIIT (61 aa)) form the TGS domain. A catalytic region spans residues 242–533 (DHRKIGKALD…LIEHYAGFMP (292 aa)). Positions 333, 384, and 510 each coordinate Zn(2+).

This sequence belongs to the class-II aminoacyl-tRNA synthetase family. Homodimer. Zn(2+) is required as a cofactor.

It localises to the cytoplasm. The enzyme catalyses tRNA(Thr) + L-threonine + ATP = L-threonyl-tRNA(Thr) + AMP + diphosphate + H(+). In terms of biological role, catalyzes the attachment of threonine to tRNA(Thr) in a two-step reaction: L-threonine is first activated by ATP to form Thr-AMP and then transferred to the acceptor end of tRNA(Thr). Also edits incorrectly charged L-seryl-tRNA(Thr). The polypeptide is Threonine--tRNA ligase (Acinetobacter baumannii (strain SDF)).